The primary structure comprises 224 residues: tRNA (guanine-N(7)-)-methyltransferase (224 aa).

4 residues coordinate S-adenosyl-L-methionine: Glu-56, Glu-81, Asp-108, and Asp-131. Asp-131 is an active-site residue. Substrate contacts are provided by residues Lys-135, Asp-167, and 202 to 205; that span reads TKFE.

It belongs to the class I-like SAM-binding methyltransferase superfamily. TrmB family.

The catalysed reaction is guanosine(46) in tRNA + S-adenosyl-L-methionine = N(7)-methylguanosine(46) in tRNA + S-adenosyl-L-homocysteine. It functions in the pathway tRNA modification; N(7)-methylguanine-tRNA biosynthesis. Its function is as follows. Catalyzes the formation of N(7)-methylguanine at position 46 (m7G46) in tRNA. The chain is tRNA (guanine-N(7)-)-methyltransferase from Nitrosomonas eutropha (strain DSM 101675 / C91 / Nm57).